A 339-amino-acid polypeptide reads, in one-letter code: Ketol-acid reductoisomerase (NADP(+)) (339 aa).

One can recognise a KARI N-terminal Rossmann domain in the interval methionine 1–threonine 182. NADP(+) is bound by residues tyrosine 24–glutamine 27, arginine 48, serine 51, serine 53, and aspartate 83–glutamine 86. The active site involves histidine 108. Glycine 134 contacts NADP(+). Residues threonine 183–isoleucine 328 form the KARI C-terminal knotted domain. 4 residues coordinate Mg(2+): aspartate 191, glutamate 195, glutamate 227, and glutamate 231. Residue serine 252 coordinates substrate.

This sequence belongs to the ketol-acid reductoisomerase family. Requires Mg(2+) as cofactor.

It carries out the reaction (2R)-2,3-dihydroxy-3-methylbutanoate + NADP(+) = (2S)-2-acetolactate + NADPH + H(+). The catalysed reaction is (2R,3R)-2,3-dihydroxy-3-methylpentanoate + NADP(+) = (S)-2-ethyl-2-hydroxy-3-oxobutanoate + NADPH + H(+). It functions in the pathway amino-acid biosynthesis; L-isoleucine biosynthesis; L-isoleucine from 2-oxobutanoate: step 2/4. It participates in amino-acid biosynthesis; L-valine biosynthesis; L-valine from pyruvate: step 2/4. Involved in the biosynthesis of branched-chain amino acids (BCAA). Catalyzes an alkyl-migration followed by a ketol-acid reduction of (S)-2-acetolactate (S2AL) to yield (R)-2,3-dihydroxy-isovalerate. In the isomerase reaction, S2AL is rearranged via a Mg-dependent methyl migration to produce 3-hydroxy-3-methyl-2-ketobutyrate (HMKB). In the reductase reaction, this 2-ketoacid undergoes a metal-dependent reduction by NADPH to yield (R)-2,3-dihydroxy-isovalerate. The chain is Ketol-acid reductoisomerase (NADP(+)) from Zymomonas mobilis subsp. mobilis (strain ATCC 31821 / ZM4 / CP4).